The sequence spans 89 residues: Phosphoribulokinase, chloroplastic (89 aa).

The tract at residues 1 to 22 (LTSVFGGAAEPPRGGNPDSNTL) is disordered.

Belongs to the phosphoribulokinase family.

It localises to the plastid. It is found in the chloroplast. It catalyses the reaction D-ribulose 5-phosphate + ATP = D-ribulose 1,5-bisphosphate + ADP + H(+). It functions in the pathway carbohydrate biosynthesis; Calvin cycle. Light regulated via thioredoxin by reversible oxidation/reduction of sulfhydryl/disulfide groups. This is Phosphoribulokinase, chloroplastic from Vitis sp. (Grape).